A 576-amino-acid chain; its full sequence is Urease subunit alpha (576 aa).

The region spanning 132-576 is the Urease domain; it reads GGVDTHIHFI…LPMAQRYFLF (445 aa). Ni(2+) contacts are provided by His-137, His-139, and Lys-220. Position 220 is an N6-carboxylysine (Lys-220). His-222 is a binding site for substrate. Ni(2+)-binding residues include His-249 and His-275. His-323 acts as the Proton donor in catalysis. Asp-363 is a Ni(2+) binding site.

The protein belongs to the metallo-dependent hydrolases superfamily. Urease alpha subunit family. Heterotrimer of UreA (gamma), UreB (beta) and UreC (alpha) subunits. Three heterotrimers associate to form the active enzyme. It depends on Ni cation as a cofactor. Carboxylation allows a single lysine to coordinate two nickel ions.

It localises to the cytoplasm. The catalysed reaction is urea + 2 H2O + H(+) = hydrogencarbonate + 2 NH4(+). Its pathway is nitrogen metabolism; urea degradation; CO(2) and NH(3) from urea (urease route): step 1/1. The sequence is that of Urease subunit alpha from Arthrobacter sp. (strain FB24).